Consider the following 338-residue polypeptide: Anthranilate phosphoribosyltransferase (338 aa).

Residues Gly81, 84–85 (GD), Thr89, 91–94 (NIST), 109–117 (KHGNRSMVS), and Ser121 contribute to the 5-phospho-alpha-D-ribose 1-diphosphate site. Residue Gly81 participates in anthranilate binding. Residue Ser93 participates in Mg(2+) binding. Asn112 is a binding site for anthranilate. Arg167 lines the anthranilate pocket. Positions 226 and 227 each coordinate Mg(2+).

The protein belongs to the anthranilate phosphoribosyltransferase family. As to quaternary structure, homodimer. Mg(2+) is required as a cofactor.

It catalyses the reaction N-(5-phospho-beta-D-ribosyl)anthranilate + diphosphate = 5-phospho-alpha-D-ribose 1-diphosphate + anthranilate. It functions in the pathway amino-acid biosynthesis; L-tryptophan biosynthesis; L-tryptophan from chorismate: step 2/5. Functionally, catalyzes the transfer of the phosphoribosyl group of 5-phosphorylribose-1-pyrophosphate (PRPP) to anthranilate to yield N-(5'-phosphoribosyl)-anthranilate (PRA). The sequence is that of Anthranilate phosphoribosyltransferase from Acidithiobacillus ferrooxidans (strain ATCC 23270 / DSM 14882 / CIP 104768 / NCIMB 8455) (Ferrobacillus ferrooxidans (strain ATCC 23270)).